Reading from the N-terminus, the 675-residue chain is Cysteine-rich receptor-like protein kinase 25 (675 aa).

A signal peptide spans 1–25 (MSSCFKSSVSLFSVFLFMILKTVTS). Over 26–281 (DPTYLYHICP…IPSEKGKGKN (256 aa)) the chain is Extracellular. 2 Gnk2-homologous domains span residues 28 to 134 (TYLY…NQSI) and 140 to 247 (IRPG…LYPF). N-linked (GlcNAc...) asparagine glycosylation is found at Asn-36, Asn-43, Asn-77, Asn-106, Asn-131, Asn-151, Asn-161, Asn-188, Asn-249, and Asn-281. A helical membrane pass occupies residues 282–302 (LTVIVTAIAVPVSVCVLLLGA). Residues 303–675 (MCWLLARRRN…DSSITIVYPR (373 aa)) are Cytoplasmic-facing. One can recognise a Protein kinase domain in the interval 347-622 (FSESNKLGHG…DILVMMNSFT (276 aa)). ATP-binding positions include 353–361 (LGHGGFGEV) and Lys-375. Tyr-420 bears the Phosphotyrosine mark. The active-site Proton acceptor is Asp-472. At Ser-476 the chain carries Phosphoserine. Thr-512 is modified (phosphothreonine). Tyr-520 bears the Phosphotyrosine mark. The disordered stretch occupies residues 638 to 661 (MKDSRDPRSGGSASDHSATSKSLP). Residues 648–661 (GSASDHSATSKSLP) are compositionally biased toward polar residues.

It belongs to the protein kinase superfamily. Ser/Thr protein kinase family. CRK subfamily.

The protein localises to the membrane. The enzyme catalyses L-seryl-[protein] + ATP = O-phospho-L-seryl-[protein] + ADP + H(+). It carries out the reaction L-threonyl-[protein] + ATP = O-phospho-L-threonyl-[protein] + ADP + H(+). This Arabidopsis thaliana (Mouse-ear cress) protein is Cysteine-rich receptor-like protein kinase 25 (CRK25).